The sequence spans 429 residues: Cyclin-B2-2 (429 aa).

Residues 66 to 98 (SQRKQESCDKKKLDSLHPSISRSQEETKKLKPS) are disordered. Basic and acidic residues predominate over residues 68–80 (RKQESCDKKKLDS).

It belongs to the cyclin family. Cyclin AB subfamily. As to quaternary structure, interacts with CDC20-1 and CDC20-2. As to expression, expressed in roots.

This chain is Cyclin-B2-2 (CYCB2-2), found in Arabidopsis thaliana (Mouse-ear cress).